We begin with the raw amino-acid sequence, 317 residues long: Ribose-phosphate pyrophosphokinase A (317 aa).

Mg(2+)-binding residues include Asp130, His132, and Asp145. The segment at 212-227 (KDKVALIVDDMADTCG) is binding of phosphoribosylpyrophosphate.

This sequence belongs to the ribose-phosphate pyrophosphokinase family. The cofactor is Mg(2+).

It carries out the reaction D-ribose 5-phosphate + ATP = 5-phospho-alpha-D-ribose 1-diphosphate + AMP + H(+). It participates in metabolic intermediate biosynthesis; 5-phospho-alpha-D-ribose 1-diphosphate biosynthesis; 5-phospho-alpha-D-ribose 1-diphosphate from D-ribose 5-phosphate (route I): step 1/1. In Dictyostelium discoideum (Social amoeba), this protein is Ribose-phosphate pyrophosphokinase A (prsA).